Reading from the N-terminus, the 250-residue chain is Heat stress transcription factor C-1b (250 aa).

Residues E129 to E182 adopt a coiled-coil conformation. The segment at L144–A180 is hydrophobic repeat HR-A/B. Positions A199–G226 are disordered. Residues K209–R212 carry the Nuclear localization signal motif.

This sequence belongs to the HSF family. Class C subfamily. As to quaternary structure, homotrimer. In terms of processing, exhibits temperature-dependent phosphorylation.

The protein resides in the nucleus. Functionally, transcriptional regulator that specifically binds DNA of heat shock promoter elements (HSE). In Oryza sativa subsp. japonica (Rice), this protein is Heat stress transcription factor C-1b (HSFC1B).